A 585-amino-acid chain; its full sequence is PiggyBac transposable element-derived protein 4 (585 aa).

The tract at residues 1-73 (MSNPRKRSIP…STSSDSGRSM (73 aa)) is disordered. Residues 25–40 (DSFDESDFSEIDDSDN) show a composition bias toward acidic residues. The segment covering 47–61 (EADKIRPLSHLESDG) has biased composition (basic and acidic residues). Over residues 62-72 (KSSTSSDSGRS) the composition is skewed to low complexity.

This chain is PiggyBac transposable element-derived protein 4 (PGBD4), found in Homo sapiens (Human).